Here is a 258-residue protein sequence, read N- to C-terminus: uncharacterized protein (258 aa).

This is an uncharacterized protein from Acidianus filamentous virus 2 (isolate Italy/Pozzuoli) (AFV-2).